The chain runs to 156 residues: Cyanate hydratase (156 aa).

Active-site residues include R96, E99, and S122.

The protein belongs to the cyanase family.

The catalysed reaction is cyanate + hydrogencarbonate + 3 H(+) = NH4(+) + 2 CO2. Functionally, catalyzes the reaction of cyanate with bicarbonate to produce ammonia and carbon dioxide. The polypeptide is Cyanate hydratase (Burkholderia vietnamiensis (strain G4 / LMG 22486) (Burkholderia cepacia (strain R1808))).